The sequence spans 585 residues: Serine/threonine-protein kinase Nek3 (585 aa).

The Protein kinase domain maps to 4–258; sequence YEVLEQIGKG…AAELLKHPHL (255 aa). ATP-binding positions include 10-18 and lysine 33; that span reads IGKGSFGSA. Aspartate 129 (proton acceptor) is an active-site residue. 2 disordered regions span residues 354 to 413 and 489 to 511; these read GNHS…TPVN and DSSKNHTGDSSDPSILGTDSNPL. Polar residues-rich tracts occupy residues 400-413 and 498-511; these read RASQPTRRASTPVN and SSDPSILGTDSNPL.

It belongs to the protein kinase superfamily. NEK Ser/Thr protein kinase family. NIMA subfamily. Interacts with PLIM2B. Expressed in pollen grains.

The enzyme catalyses L-seryl-[protein] + ATP = O-phospho-L-seryl-[protein] + ADP + H(+). It catalyses the reaction L-threonyl-[protein] + ATP = O-phospho-L-threonyl-[protein] + ADP + H(+). May be involved in plant development processes. May function downstream of DCW11 in retrograde signaling from the mitochondria to the nucleus. Seems to be involved in the mechanism of cytoplasmic male sterility (CMS) occurrence. The protein is Serine/threonine-protein kinase Nek3 of Oryza sativa subsp. japonica (Rice).